The sequence spans 88 residues: MIASSVKAEVVKANARSANDTGSPEVQVALLTARINELTPHFKQHAKDHHGRRGLLRMVSRRRKLLDYLKAKDADRYTALIAKLGLRK.

It belongs to the universal ribosomal protein uS15 family. As to quaternary structure, part of the 30S ribosomal subunit. Forms a bridge to the 50S subunit in the 70S ribosome, contacting the 23S rRNA.

In terms of biological role, one of the primary rRNA binding proteins, it binds directly to 16S rRNA where it helps nucleate assembly of the platform of the 30S subunit by binding and bridging several RNA helices of the 16S rRNA. Its function is as follows. Forms an intersubunit bridge (bridge B4) with the 23S rRNA of the 50S subunit in the ribosome. This chain is Small ribosomal subunit protein uS15, found in Acidovorax sp. (strain JS42).